The chain runs to 295 residues: Signal-transducing adaptor protein 1 (295 aa).

Residues 25-121 (PLYFEGFLLI…WRGFILTVTE (97 aa)) form the PH domain. Position 168 is a phosphotyrosine (tyrosine 168). An SH2 domain is found at 177-280 (ACFYTVSRKE…TDENTGQEPS (104 aa)). The disordered stretch occupies residues 270–295 (STDENTGQEPSMEGRSEKLKKNPHIA).

As to quaternary structure, interacts with KIT and CSF1R. Interacts with URI1; the interaction is phosphorylation-dependent and occurs in a growth-dependent manner. Post-translationally, phosphorylated on tyrosine by TEC. Phosphorylated on tyrosine by KIT.

The protein localises to the nucleus. It is found in the cytoplasm. It localises to the mitochondrion. In terms of biological role, in BCR signaling, appears to function as a docking protein acting downstream of TEC and participates in a positive feedback loop by increasing the activity of TEC. This Homo sapiens (Human) protein is Signal-transducing adaptor protein 1 (STAP1).